Reading from the N-terminus, the 180-residue chain is Oligoribonuclease (180 aa).

The Exonuclease domain maps to 7-170; the sequence is LIWIDLEMTG…DDIRESIAEL (164 aa). Residue Tyr-128 is part of the active site.

This sequence belongs to the oligoribonuclease family.

The protein localises to the cytoplasm. 3'-to-5' exoribonuclease specific for small oligoribonucleotides. The chain is Oligoribonuclease from Pseudomonas putida (strain ATCC 700007 / DSM 6899 / JCM 31910 / BCRC 17059 / LMG 24140 / F1).